The chain runs to 484 residues: Transcription factor TGAL4 (484 aa).

A compositionally biased stretch (polar residues) spans 1–11 (MGEASSSSGHP). Disordered stretches follow at residues 1–22 (MGEA…GYGF), 84–137 (ATAA…NASS), and 155–181 (QQEQ…DPKT). Over residues 123–137 (SESSSKNNSNQNASS) the composition is skewed to low complexity. Positions 163 to 173 (ATNSPTHSSKT) are enriched in polar residues. The 45-residue stretch at 178-222 (DPKTMRRLAQNREAARKSRLRKKAYIQQLESSKLKLAQMEQDIHR) folds into the bZIP domain. Residues 180–200 (KTMRRLAQNREAARKSRLRKK) form a basic motif region. Residues 206-220 (LESSKLKLAQMEQDI) are leucine-zipper. A DOG1 domain is found at 241-455 (AAMFDVDYAR…RALSSLWASR (215 aa)).

It belongs to the bZIP family. Interacts with NPR1/NH1 and NPR3/NH3.

The protein localises to the nucleus. Functionally, transcriptional regulator involved in defense response. The polypeptide is Transcription factor TGAL4 (Oryza sativa subsp. japonica (Rice)).